The chain runs to 204 residues: Protein GrpE (204 aa).

2 stretches are compositionally biased toward basic and acidic residues: residues 1 to 21 (MEEL…EVKG) and 36 to 46 (EEKIETEVEQK). The segment at 1-46 (MEELEKDKIERNEEMSEEVKGEGPPSELEQSEEVVEEKIETEVEQK) is disordered.

Belongs to the GrpE family. In terms of assembly, homodimer.

The protein resides in the cytoplasm. In terms of biological role, participates actively in the response to hyperosmotic and heat shock by preventing the aggregation of stress-denatured proteins, in association with DnaK and GrpE. It is the nucleotide exchange factor for DnaK and may function as a thermosensor. Unfolded proteins bind initially to DnaJ; upon interaction with the DnaJ-bound protein, DnaK hydrolyzes its bound ATP, resulting in the formation of a stable complex. GrpE releases ADP from DnaK; ATP binding to DnaK triggers the release of the substrate protein, thus completing the reaction cycle. Several rounds of ATP-dependent interactions between DnaJ, DnaK and GrpE are required for fully efficient folding. This Caldanaerobacter subterraneus subsp. tengcongensis (strain DSM 15242 / JCM 11007 / NBRC 100824 / MB4) (Thermoanaerobacter tengcongensis) protein is Protein GrpE.